Here is a 197-residue protein sequence, read N- to C-terminus: Phospholipid hydroperoxide glutathione peroxidase (197 aa).

S40 bears the Phosphoserine mark. Residue U73 is part of the active site. Position 73 (U73) is a non-standard amino acid, selenocysteine.

It belongs to the glutathione peroxidase family. In terms of assembly, monomer. Has a tendency to form higher mass oligomers. Interacts with FUNDC1; this interaction promotes GPX4 recruitment into mitochondria through TOM/TIM complex where it is degraded by mitophagy.

The protein localises to the mitochondrion. It localises to the cytoplasm. The enzyme catalyses a hydroperoxy polyunsaturated fatty acid + 2 glutathione = a hydroxy polyunsaturated fatty acid + glutathione disulfide + H2O. The catalysed reaction is 2 glutathione + H2O2 = glutathione disulfide + 2 H2O. It catalyses the reaction tert-butyl hydroperoxide + 2 glutathione = tert-butanol + glutathione disulfide + H2O. It carries out the reaction cumene hydroperoxide + 2 glutathione = 2-phenylpropan-2-ol + glutathione disulfide + H2O. The enzyme catalyses (9S)-hydroperoxy-(10E,12Z)-octadecadienoate + 2 glutathione = (9S)-hydroxy-(10E,12Z)-octadecadienoate + glutathione disulfide + H2O. The catalysed reaction is (13S)-hydroperoxy-(9Z,11E)-octadecadienoate + 2 glutathione = (13S)-hydroxy-(9Z,11E)-octadecadienoate + glutathione disulfide + H2O. It catalyses the reaction (5S)-hydroperoxy-(6E,8Z,11Z,14Z)-eicosatetraenoate + 2 glutathione = (5S)-hydroxy-(6E,8Z,11Z,14Z)-eicosatetraenoate + glutathione disulfide + H2O. It carries out the reaction (12R)-hydroperoxy-(5Z,8Z,10E,14Z)-eicosatetraenoate + 2 glutathione = (12R)-hydroxy-(5Z,8Z,10E,14Z)-eicosatetraenoate + glutathione disulfide + H2O. The enzyme catalyses (12S)-hydroperoxy-(5Z,8Z,10E,14Z)-eicosatetraenoate + 2 glutathione = (12S)-hydroxy-(5Z,8Z,10E,14Z)-eicosatetraenoate + glutathione disulfide + H2O. The catalysed reaction is (15S)-hydroperoxy-(5Z,8Z,11Z,13E)-eicosatetraenoate + 2 glutathione = (15S)-hydroxy-(5Z,8Z,11Z,13E)-eicosatetraenoate + glutathione disulfide + H2O. It catalyses the reaction (5S)-hydroperoxy-(6E,8Z,11Z,14Z,17Z)-eicosapentaenoate + 2 glutathione = (5S)-hydroxy-(6E,8Z,11Z,14Z,17Z)-eicosapentaenoate + glutathione disulfide + H2O. It carries out the reaction (12S)-hydroperoxy-(5Z,8Z,10E,14Z,17Z)-eicosapentaenoate + 2 glutathione = (12S)-hydroxy-(5Z,8Z,10E,14Z,17Z)-eicosapentaenoate + glutathione disulfide + H2O. The enzyme catalyses (15S)-hydroperoxy-(5Z,8Z,11Z,13E,17Z)-eicosapentaenoate + 2 glutathione = (15S)-hydroxy-(5Z,8Z,11Z,13E,17Z)-eicosapentaenoate + glutathione disulfide + H2O. The catalysed reaction is (15S)-hydroperoxy-(11Z,13E)-eicosadienoate + 2 glutathione = (15S)-hydroxy-(11Z,13E)-eicosadienoate + glutathione disulfide + H2O. It catalyses the reaction (17S)-hydroperoxy-(4Z,7Z,10Z,13Z,15E,19Z)-docosahexaenoate + 2 glutathione = (17S)-hydroxy-(4Z,7Z,10Z,13Z,15E,19Z)-docosahexaenoate + glutathione disulfide + H2O. It carries out the reaction a hydroperoxy-1,2-diacyl-glycero-3-phosphocholine + 2 glutathione = a hydroxy-1,2-diacyl-glycero-3-phosphocholine + glutathione disulfide + H2O. Its function is as follows. Essential antioxidant peroxidase that directly reduces phospholipid hydroperoxide even if they are incorporated in membranes and lipoproteins. Can also reduce fatty acid hydroperoxide, cholesterol hydroperoxide and thymine hydroperoxide. Plays a key role in protecting cells from oxidative damage by preventing membrane lipid peroxidation. Required to prevent cells from ferroptosis, a non-apoptotic cell death resulting from an iron-dependent accumulation of lipid reactive oxygen species. The presence of selenocysteine (Sec) versus Cys at the active site is essential for life: it provides resistance to overoxidation and prevents cells against ferroptosis. The presence of Sec at the active site is also essential for the survival of a specific type of parvalbumin-positive interneurons, thereby preventing against fatal epileptic seizures. May be required to protect cells from the toxicity of ingested lipid hydroperoxides. Required for normal sperm development and male fertility. Essential for maturation and survival of photoreceptor cells. Plays a role in a primary T-cell response to viral and parasitic infection by protecting T-cells from ferroptosis and by supporting T-cell expansion. Plays a role of glutathione peroxidase in platelets in the arachidonic acid metabolism. Reduces hydroperoxy ester lipids formed by a 15-lipoxygenase that may play a role as down-regulator of the cellular 15-lipoxygenase pathway. Can also reduce small soluble hydroperoxides such as H2O2, cumene hydroperoxide and tert-butyl hydroperoxide. This is Phospholipid hydroperoxide glutathione peroxidase from Pongo pygmaeus (Bornean orangutan).